The following is a 321-amino-acid chain: Ribosomal protein L11 methyltransferase (321 aa).

Residues T150, G171, D193, and N256 each coordinate S-adenosyl-L-methionine.

The protein belongs to the methyltransferase superfamily. PrmA family.

The protein resides in the cytoplasm. It carries out the reaction L-lysyl-[protein] + 3 S-adenosyl-L-methionine = N(6),N(6),N(6)-trimethyl-L-lysyl-[protein] + 3 S-adenosyl-L-homocysteine + 3 H(+). In terms of biological role, methylates ribosomal protein L11. This Herpetosiphon aurantiacus (strain ATCC 23779 / DSM 785 / 114-95) protein is Ribosomal protein L11 methyltransferase.